A 172-amino-acid chain; its full sequence is uncharacterized protein (172 aa).

Belongs to the flavoredoxin family. It depends on FMN as a cofactor.

This is an uncharacterized protein from Pyrococcus horikoshii (strain ATCC 700860 / DSM 12428 / JCM 9974 / NBRC 100139 / OT-3).